Reading from the N-terminus, the 245-residue chain is DnaJ homolog subfamily B member 6-B (245 aa).

Positions 3–69 constitute a J domain; it reads EYYDVLGVQR…KKRDIYDKYG (67 aa).

Homooligomer.

Its subcellular location is the cytoplasm. The protein localises to the perinuclear region. It localises to the nucleus. In terms of biological role, has a stimulatory effect on the ATPase activity of HSP70 in a dose-dependent and time-dependent manner and hence acts as a co-chaperone of HSP70. Plays an indispensable role in the organization of KRT8/KRT18 filaments. Acts as an endogenous molecular chaperone for neuronal proteins including huntingtin. Suppresses aggregation and toxicity of polyglutamine-containing, aggregation-prone proteins. Also reduces cellular toxicity and caspase-3 activity. The polypeptide is DnaJ homolog subfamily B member 6-B (dnajb6-b) (Xenopus laevis (African clawed frog)).